Here is a 286-residue protein sequence, read N- to C-terminus: Phosphate import ATP-binding protein PstB (286 aa).

The 242-residue stretch at Val-40–Ile-281 folds into the ABC transporter domain. Gly-72–Ser-79 is a binding site for ATP.

Belongs to the ABC transporter superfamily. Phosphate importer (TC 3.A.1.7) family. The complex is composed of two ATP-binding proteins (PstB), two transmembrane proteins (PstC and PstA) and a solute-binding protein (PstS).

The protein localises to the cell inner membrane. It carries out the reaction phosphate(out) + ATP + H2O = ADP + 2 phosphate(in) + H(+). Part of the ABC transporter complex PstSACB involved in phosphate import. Responsible for energy coupling to the transport system. The chain is Phosphate import ATP-binding protein PstB from Chlorobaculum tepidum (strain ATCC 49652 / DSM 12025 / NBRC 103806 / TLS) (Chlorobium tepidum).